Reading from the N-terminus, the 218-residue chain is Superoxide dismutase [Mn] 2, mitochondrial (218 aa).

The N-terminal 24 residues, 1–24 (MLQSTARTASKLVQPVAGVLAVRS), are a transit peptide targeting the mitochondrion. Mn(2+) contacts are provided by histidine 50, histidine 98, aspartate 179, and histidine 183.

This sequence belongs to the iron/manganese superoxide dismutase family. In terms of assembly, homotetramer. The cofactor is Mn(2+). In terms of tissue distribution, expressed in pharynx and rectum. Upon thermal stress, expressed in vulva, body wall muscles and hypodermis.

It is found in the mitochondrion. The catalysed reaction is 2 superoxide + 2 H(+) = H2O2 + O2. In terms of biological role, destroys superoxide anion radicals which are normally produced within the cells and which are toxic to biological systems. The sequence is that of Superoxide dismutase [Mn] 2, mitochondrial (sod-3) from Caenorhabditis elegans.